The chain runs to 42 residues: Iota-conotoxin-like R11.15 (42 aa).

4 disulfides stabilise this stretch: Cys5/Cys19, Cys12/Cys22, Cys18/Cys27, and Cys21/Cys36.

Belongs to the conotoxin I1 superfamily. Expressed by the venom duct.

The protein localises to the secreted. Iota-conotoxins bind to voltage-gated sodium channels (Nav) and act as agonists by shifting the voltage-dependence of activation to more hyperpolarized levels. Produces general excitatory symptoms. This Conus radiatus (Rayed cone) protein is Iota-conotoxin-like R11.15.